The chain runs to 930 residues: RNA-binding protein 10 (930 aa).

2 stretches are compositionally biased toward basic and acidic residues: residues 1–14 (MEYE…DRTG) and 21–45 (RSQD…RSYP). The disordered stretch occupies residues 1 to 127 (MEYERRGGRG…EEDEEEEEKA (127 aa)). An N-acetylserine modification is found at Glu2. Arg30, Ser61, and Ser89 each carry phosphoserine. Acidic residues predominate over residues 59–70 (DSSEEQSAEDSY). Basic residues predominate over residues 80–89 (RRRRRRHRHS). The span at 98–111 (RDGDYRDQDYRTEQ) shows a compositional bias: basic and acidic residues. Residues 112 to 125 (GEEEEEEEDEEEEE) are compositionally biased toward acidic residues. The RRM 1 domain occupies 129-209 (NIVMLRMLPQ…QKVSMHYSDP (81 aa)). The segment at 212–242 (KINEDWLCNKCGVQNFKRREKCFKCGVPKSE) adopts a RanBP2-type zinc-finger fold. One can recognise an RRM 2 domain in the interval 300–384 (DTIILRNLNP…KTINVEFAKG (85 aa)). Position 383 is an N6-acetyllysine (Lys383). Disordered regions lie at residues 466 to 524 (PGIT…AANS), 537 to 569 (SELQ…VPDV), 620 to 685 (EQSA…DERR), and 700 to 753 (KGAL…EEKL). Residues 508–524 (YQQSAEASSSQGTAANS) are compositionally biased toward polar residues. The span at 541 to 557 (SPTHPSSALPPATSPTA) shows a compositional bias: low complexity. Basic and acidic residues-rich tracts occupy residues 623–639 (ADGH…GKEK), 653–669 (KDME…KENF), and 700–709 (KGALAERQHT). Phosphoserine occurs at positions 718, 723, 733, 736, and 738. Basic and acidic residues predominate over residues 743–753 (ERGGPEREEKL). Residues 759–784 (LACLLCRRQFPSKEALIRHQQLSGLH) form a C2H2-type; atypical zinc finger. Residues Ser781 and Ser797 each carry the phosphoserine modification. The segment covering 815-826 (RDRAAERREKYG) has biased composition (basic and acidic residues). Residues 815–861 (RDRAAERREKYGIPEPPEPKRRKYGGISTASVDFEQPTRDGLGSDNI) are disordered. At Ser845 the chain carries Phosphoserine. The G-patch domain occupies 858–904 (SDNIGSRMLQAMGWKEGSGLGRKKQGIVTPIEAQTRVRGSGLGARGS). An Omega-N-methylarginine modification is found at Arg902.

In terms of assembly, associates with the spliceosome. Component of a large chromatin remodeling complex, at least composed of MYSM1, PCAF, RBM10 and KIF11/TRIP5.

It is found in the nucleus. Binds to ssRNA containing the consensus sequence 5'-AGGUAA-3'. May be involved in post-transcriptional processing, most probably in mRNA splicing. Binds to RNA homopolymers, with a preference for poly(G) and poly(U) and little for poly(A). May bind to specific miRNA hairpins. This is RNA-binding protein 10 from Homo sapiens (Human).